Consider the following 350-residue polypeptide: Phosphotriesterase-related protein (350 aa).

The a divalent metal cation site is built by histidine 22, histidine 24, glutamate 169, histidine 201, histidine 230, and aspartate 298.

The protein belongs to the metallo-dependent hydrolases superfamily. Phosphotriesterase family. A divalent metal cation is required as a cofactor.

The polypeptide is Phosphotriesterase-related protein (Drosophila pseudoobscura pseudoobscura (Fruit fly)).